The following is a 338-amino-acid chain: DNA-directed RNA polymerase subunit alpha (338 aa).

The segment at 1–234 (MIHKNWAELI…DQLSVFVNFD (234 aa)) is alpha N-terminal domain (alpha-NTD). The interval 250-338 (FDPRLLKKVD…DLAKRFDDQF (89 aa)) is alpha C-terminal domain (alpha-CTD).

Belongs to the RNA polymerase alpha chain family. As to quaternary structure, homodimer. The RNAP catalytic core consists of 2 alpha, 1 beta, 1 beta' and 1 omega subunit. When a sigma factor is associated with the core the holoenzyme is formed, which can initiate transcription.

It carries out the reaction RNA(n) + a ribonucleoside 5'-triphosphate = RNA(n+1) + diphosphate. In terms of biological role, DNA-dependent RNA polymerase catalyzes the transcription of DNA into RNA using the four ribonucleoside triphosphates as substrates. The polypeptide is DNA-directed RNA polymerase subunit alpha (Paracoccus denitrificans (strain Pd 1222)).